We begin with the raw amino-acid sequence, 272 residues long: Putative phosphoenolpyruvate synthase regulatory protein (272 aa).

Position 152–159 (152–159) interacts with ADP; the sequence is GVSRCGKT.

Belongs to the pyruvate, phosphate/water dikinase regulatory protein family. PSRP subfamily.

It catalyses the reaction [pyruvate, water dikinase] + ADP = [pyruvate, water dikinase]-phosphate + AMP + H(+). The enzyme catalyses [pyruvate, water dikinase]-phosphate + phosphate + H(+) = [pyruvate, water dikinase] + diphosphate. In terms of biological role, bifunctional serine/threonine kinase and phosphorylase involved in the regulation of the phosphoenolpyruvate synthase (PEPS) by catalyzing its phosphorylation/dephosphorylation. This Pseudomonas fluorescens (strain Pf0-1) protein is Putative phosphoenolpyruvate synthase regulatory protein.